Reading from the N-terminus, the 268-residue chain is tRNA (guanine-N(1)-)-methyltransferase (268 aa).

S-adenosyl-L-methionine is bound by residues G113 and 133 to 138 (IGDYVL). The interval 238–268 (RCPPDPFAHQGPVYEGDQLERPEGGEQGASR) is disordered.

This sequence belongs to the RNA methyltransferase TrmD family. In terms of assembly, homodimer.

It is found in the cytoplasm. It carries out the reaction guanosine(37) in tRNA + S-adenosyl-L-methionine = N(1)-methylguanosine(37) in tRNA + S-adenosyl-L-homocysteine + H(+). In terms of biological role, specifically methylates guanosine-37 in various tRNAs. This is tRNA (guanine-N(1)-)-methyltransferase from Thermomicrobium roseum (strain ATCC 27502 / DSM 5159 / P-2).